The chain runs to 138 residues: MSDNQICDISNEVLEELKKFRFSKSKNNAALILKVDREKQTVVLDEFIDDISVDELQDTLPGHQPRYVIYTYKMVHDDQRISYPMCFIFYTPRDSQIELQMMYACTKSALQREVDLTRVYEIRELDELTEEWLKAKLK.

Residues 3–138 (DNQICDISNE…TEEWLKAKLK (136 aa)) enclose the ADF-H domain.

It belongs to the actin-binding proteins ADF family. GMF subfamily. In ovaries, expressed in follicular epithelium, in polar cells, migrating border cells, and centripedal cells (at protein level).

The protein resides in the cell projection. Its subcellular location is the lamellipodium. The protein localises to the cytoplasm. It is found in the perinuclear region. It localises to the nucleus. The protein resides in the cell cortex. In terms of biological role, inhibits Arp2/3-mediated actin nucleation. Together with flr, promotes Arp2/3-nucleated actin filament array disassembly. Promotes debranching. Regulates lamellipodial protrusion dynamics possibly by facilitating lamellipodial retraction. In egg chambers, enhances the retraction dynamics of cellular extensions in border cells and thus together with flr plays an important role in directional migration of border cell clusters. The sequence is that of Glia maturation factor from Drosophila melanogaster (Fruit fly).